A 98-amino-acid chain; its full sequence is DNA-binding protein Fis (98 aa).

The H-T-H motif DNA-binding region spans 74–93 (QTRAALMMGINRGTLRKKLK).

This sequence belongs to the transcriptional regulatory Fis family. In terms of assembly, homodimer.

Functionally, activates ribosomal RNA transcription. Plays a direct role in upstream activation of rRNA promoters. This Pectobacterium atrosepticum (strain SCRI 1043 / ATCC BAA-672) (Erwinia carotovora subsp. atroseptica) protein is DNA-binding protein Fis.